A 71-amino-acid chain; its full sequence is DNA-directed RNA polymerase subunit omega (71 aa).

It belongs to the RNA polymerase subunit omega family. The RNAP catalytic core consists of 2 alpha, 1 beta, 1 beta' and 1 omega subunit. When a sigma factor is associated with the core the holoenzyme is formed, which can initiate transcription.

The enzyme catalyses RNA(n) + a ribonucleoside 5'-triphosphate = RNA(n+1) + diphosphate. Functionally, promotes RNA polymerase assembly. Latches the N- and C-terminal regions of the beta' subunit thereby facilitating its interaction with the beta and alpha subunits. This Azoarcus sp. (strain BH72) protein is DNA-directed RNA polymerase subunit omega.